The primary structure comprises 283 residues: Putative replication protein XF_b0001 (283 aa).

This Xylella fastidiosa (strain 9a5c) protein is Putative replication protein XF_b0001.